The chain runs to 305 residues: Probable aspartoacylase (305 aa).

Zn(2+)-binding residues include His-13 and Glu-16. Substrate is bound by residues Arg-55 and 62–63 (NR). Position 105 (His-105) interacts with Zn(2+). The substrate site is built by Glu-163 and Tyr-273.

It belongs to the AspA/AstE family. Aspartoacylase subfamily. Zn(2+) serves as cofactor.

The catalysed reaction is an N-acyl-L-aspartate + H2O = a carboxylate + L-aspartate. In Prochlorococcus marinus (strain NATL1A), this protein is Probable aspartoacylase.